Reading from the N-terminus, the 953-residue chain is Vacuolar membrane protease (953 aa).

The Cytoplasmic segment spans residues 1–16 (MDQTKPPRRNPLAFTP). Residues 17–37 (WPVTLITAVVYLAFVIPLLVI) form a helical membrane-spanning segment. The Vacuolar portion of the chain corresponds to 38-382 (HHVVPSAPTS…TFVLFRLHTL (345 aa)). N-linked (GlcNAc...) asparagine glycans are attached at residues asparagine 53 and asparagine 115. The Zn(2+) site is built by histidine 165 and aspartate 177. The active-site Proton acceptor is the glutamate 211. Glutamate 212, glutamate 237, and histidine 310 together coordinate Zn(2+). The helical transmembrane segment at 383–403 (FALSVTLLVVAPIVLLLTSII) threads the bilayer. At 404-437 (LTKVDKMYLFRTSIRPEGSLEVLPLYGDRGVIRY) the chain is on the cytoplasmic side. Residues 438–458 (PFLLGIPTAVTIGLAYLLTKF) form a helical membrane-spanning segment. The Vacuolar portion of the chain corresponds to 459–464 (NPYIVH). A helical membrane pass occupies residues 465–485 (SSQYAVWSMMVSVWIFLAWFV). Residues 486-499 (SRVADFARPSAFHR) lie on the Cytoplasmic side of the membrane. The chain crosses the membrane as a helical span at residues 500 to 520 (VYTLTWTFVVMWVLQVIATVY). At 521–524 (QDRW) the chain is on the vacuolar side. The chain crosses the membrane as a helical span at residues 525–545 (ALGGSYFIFFAYAGTFLATWI). Over 546-650 (SYLELFALPR…SLPKWLWLLQ (105 aa)) the chain is Cytoplasmic. The interval 570–599 (ASSHSSRRGLSEEDEEDEDEAPTESTSLLG) is disordered. Residues 581-591 (EEDEEDEDEAP) are compositionally biased toward acidic residues. The helical transmembrane segment at 651–671 (FLLAAPIVLILVGPIALLLTG) threads the bilayer. Topologically, residues 672–684 (SLHQTGQDGSSSL) are vacuolar. A helical transmembrane segment spans residues 685–705 (FIYIAIVALTTLLLSPMLPFV). Residues 706 to 711 (HRCTYH) lie on the Cytoplasmic side of the membrane. A helical transmembrane segment spans residues 712 to 732 (IPLFMLAVFAGTLIYNLVAFP). The Vacuolar segment spans residues 733 to 953 (FSDSNRLKLF…VEGRKSFEIA (221 aa)). Residue asparagine 779 is glycosylated (N-linked (GlcNAc...) asparagine).

This sequence belongs to the peptidase M28 family. Zn(2+) serves as cofactor.

Its subcellular location is the vacuole membrane. Functionally, may be involved in vacuolar sorting and osmoregulation. The chain is Vacuolar membrane protease from Emericella nidulans (strain FGSC A4 / ATCC 38163 / CBS 112.46 / NRRL 194 / M139) (Aspergillus nidulans).